Here is a 111-residue protein sequence, read N- to C-terminus: uncharacterized protein (111 aa).

A helical membrane pass occupies residues 81 to 101 (YFFLLFYVSFPHIFLGLFFFI).

It localises to the membrane. This is an uncharacterized protein from Schizosaccharomyces pombe (strain 972 / ATCC 24843) (Fission yeast).